A 602-amino-acid chain; its full sequence is Major facilitator superfamily multidrug transporter mfsB (602 aa).

12 consecutive transmembrane segments (helical) span residues 29–49, 67–87, 98–118, 128–148, 160–180, 201–221, 329–349, 378–398, 411–431, 439–459, 468–486, and 505–525; these read FVLA…FPYV, LYAG…GMFW, PVLI…GFAP, ALGG…AEIV, IMPF…GALA, FLLP…VGFL, IVAY…IPVF, FMLA…FPFV, VLLV…LPSI, LALI…AILL, VLGS…SRAL, and IIAW…SFWM. The disordered stretch occupies residues 527-602; the sequence is ESEPRRDSEK…RSNPLAFAED (76 aa). The span at 528 to 538 shows a compositional bias: basic and acidic residues; sequence SEPRRDSEKAG.

This sequence belongs to the major facilitator superfamily.

The protein localises to the membrane. Major facilitator superfamily transporter that may be involved in A.fumigatus adaptation to azoles such as vorizonazole. In Aspergillus fumigatus (strain ATCC MYA-4609 / CBS 101355 / FGSC A1100 / Af293) (Neosartorya fumigata), this protein is Major facilitator superfamily multidrug transporter mfsB.